The following is a 206-amino-acid chain: Large ribosomal subunit protein mL62 (206 aa).

The transit peptide at 1–29 (MAAARCLRWGLSRAEAWLLPPPTSCCHRA) directs the protein to the mitochondrion. Gln-90 is subject to N5-methylglutamine.

It belongs to the prokaryotic/mitochondrial release factor family. Mitochondrion-specific ribosomal protein mL62 subfamily. In terms of assembly, component of the mitochondrial ribosome large subunit (39S) which comprises a 16S rRNA and about 50 distinct proteins. Post-translationally, methylation of glutamine in the GGQ triplet by HEMK1.

It is found in the mitochondrion. It carries out the reaction an N-acyl-L-alpha-aminoacyl-tRNA + H2O = an N-acyl-L-amino acid + a tRNA + H(+). In terms of biological role, essential peptidyl-tRNA hydrolase component of the mitochondrial large ribosomal subunit. Acts as a codon-independent translation release factor that has lost all stop codon specificity and directs the termination of translation in mitochondrion, possibly in case of abortive elongation. May be involved in the hydrolysis of peptidyl-tRNAs that have been prematurely terminated and thus in the recycling of stalled mitochondrial ribosomes. The polypeptide is Large ribosomal subunit protein mL62 (Bos taurus (Bovine)).